A 172-amino-acid polypeptide reads, in one-letter code: Keratin-associated protein 13-3 (172 aa).

5 tandem repeats follow at residues 46–55, 56–65, 66–75, 76–85, and 92–101. A 5 X 10 AA approximate repeats region spans residues 46–101; that stretch reads CQLGSSLYRGCQETCWRPNSCQTLCVESSPCHTSCYYPRTHMLCNSCLTMHVGSRG.

This sequence belongs to the PMG family. Interacts with hair keratins.

Its function is as follows. In the hair cortex, hair keratin intermediate filaments are embedded in an interfilamentous matrix, consisting of hair keratin-associated proteins (KRTAP), which are essential for the formation of a rigid and resistant hair shaft through their extensive disulfide bond cross-linking with abundant cysteine residues of hair keratins. The matrix proteins include the high-sulfur and high-glycine-tyrosine keratins. The polypeptide is Keratin-associated protein 13-3 (KRTAP13-3) (Homo sapiens (Human)).